The primary structure comprises 126 residues: Large ribosomal subunit protein bL12 (126 aa).

It belongs to the bacterial ribosomal protein bL12 family. Homodimer. Part of the ribosomal stalk of the 50S ribosomal subunit. Forms a multimeric L10(L12)X complex, where L10 forms an elongated spine to which 2 to 4 L12 dimers bind in a sequential fashion. Binds GTP-bound translation factors.

Functionally, forms part of the ribosomal stalk which helps the ribosome interact with GTP-bound translation factors. Is thus essential for accurate translation. This chain is Large ribosomal subunit protein bL12, found in Blochmanniella floridana.